The following is a 515-amino-acid chain: Pisatin demethylase (515 aa).

Residue cysteine 453 coordinates heme.

Belongs to the cytochrome P450 family. Heme serves as cofactor.

Can detoxify the phytoalexin pisatin from garden pea. Pisatin is an antimicrobial compound produced by pea in response to infection by plant pathogens. The polypeptide is Pisatin demethylase (PDAT9) (Fusarium vanettenii (Neocosmospora pisi)).